The chain runs to 403 residues: Glyceraldehyde-3-phosphate dehydrogenase A, chloroplastic (403 aa).

The transit peptide at M1–A66 directs the protein to the chloroplast. NADP(+) contacts are provided by residues R77–I78, D102, and R147. D-glyceraldehyde 3-phosphate contacts are provided by residues S219–T221, T250, R265, T278–G279, and R301. C220 (nucleophile) is an active-site residue. N383 contacts NADP(+).

It belongs to the glyceraldehyde-3-phosphate dehydrogenase family. As to quaternary structure, tetramer of either four A chains (GAPDH 2) or two A and two B chains (GAPDH 1).

The protein resides in the plastid. The protein localises to the chloroplast. The catalysed reaction is D-glyceraldehyde 3-phosphate + phosphate + NADP(+) = (2R)-3-phospho-glyceroyl phosphate + NADPH + H(+). The protein operates within carbohydrate biosynthesis; Calvin cycle. In Zea mays (Maize), this protein is Glyceraldehyde-3-phosphate dehydrogenase A, chloroplastic (GAPA).